The primary structure comprises 495 residues: MEFAQLVDDPLKHVCRVLVVGCYVDGFRGRFFDDLDEALGGGLSSIYEQREFTGELNKVKLLNTFGKLPAERLLLVGLGNNEELNSDRLRQAAGAAATALRPVGVRKLSSILHLARDRGAETLTATVEGFALGSYSFDEYKTGKEPKTDLEEATLLFAEAGDLDYNVNKVLAETATICDAVRFARDLVSQPGNVLVPSYLAEKGREIAARYGLSCTVLEREEMAQNSMNALLAVAKGSHEPPKFIILEYRGGGEDDAVTVLVGKGVTFDSGGISLKPREGMEKMKDDMAGAAAVMGTMMAVAALKLSQNVVGLIPAAENLPGGGAYKPGDIVRSMSGQTIEIVNTDAEGRLLLCDALYFAQRYKPAALIDIATLTGACVIALGNFATGLMGNDEGLTRSLKRAGEVSGERVWELPLWDEYGELMESDIADMKNAGGPSGASISAGWFLHKFVGKTAWAHLDIAGTSWEEKGRPYRPKGATGVGVRLLVEYLRGLK.

2 residues coordinate Mn(2+): Lys-264 and Asp-269. Lys-276 is a catalytic residue. Mn(2+) is bound by residues Asp-287, Asp-346, and Glu-348. Arg-350 is a catalytic residue.

This sequence belongs to the peptidase M17 family. Mn(2+) is required as a cofactor.

It is found in the cytoplasm. It catalyses the reaction Release of an N-terminal amino acid, Xaa-|-Yaa-, in which Xaa is preferably Leu, but may be other amino acids including Pro although not Arg or Lys, and Yaa may be Pro. Amino acid amides and methyl esters are also readily hydrolyzed, but rates on arylamides are exceedingly low.. The enzyme catalyses Release of an N-terminal amino acid, preferentially leucine, but not glutamic or aspartic acids.. In terms of biological role, presumably involved in the processing and regular turnover of intracellular proteins. Catalyzes the removal of unsubstituted N-terminal amino acids from various peptides. The chain is Probable cytosol aminopeptidase from Geotalea uraniireducens (strain Rf4) (Geobacter uraniireducens).